A 91-amino-acid chain; its full sequence is Small ribosomal subunit protein uS19 (91 aa).

Belongs to the universal ribosomal protein uS19 family.

Its function is as follows. Protein S19 forms a complex with S13 that binds strongly to the 16S ribosomal RNA. The protein is Small ribosomal subunit protein uS19 of Pseudomonas fluorescens (strain SBW25).